The primary structure comprises 92 residues: Small ribosomal subunit protein uS19c (92 aa).

It belongs to the universal ribosomal protein uS19 family.

It is found in the plastid. Protein S19 forms a complex with S13 that binds strongly to the 16S ribosomal RNA. This Cuscuta obtusiflora (Peruvian dodder) protein is Small ribosomal subunit protein uS19c.